Reading from the N-terminus, the 569-residue chain is Ribonuclease J (569 aa).

Zn(2+)-binding residues include His81, His83, Asp85, His86, His150, and Asp172. A substrate-binding site is contributed by 373 to 377 (HASGH). His399 lines the Zn(2+) pocket.

It belongs to the metallo-beta-lactamase superfamily. RNA-metabolizing metallo-beta-lactamase-like family. Bacterial RNase J subfamily. As to quaternary structure, homodimer, may be a subunit of the RNA degradosome. The cofactor is Zn(2+).

It localises to the cytoplasm. Functionally, an RNase that has 5'-3' exonuclease and possibly endoonuclease activity. Involved in maturation of rRNA and in some organisms also mRNA maturation and/or decay. The polypeptide is Ribonuclease J (Mycoplasma pneumoniae (strain ATCC 29342 / M129 / Subtype 1) (Mycoplasmoides pneumoniae)).